The sequence spans 405 residues: Putative polysaccharide ligase RP358 (405 aa).

10 consecutive transmembrane segments (helical) span residues 23–43 (IAAT…ISFI), 77–97 (LFTA…NSLV), 120–140 (VLYI…LFFI), 156–178 (FGLY…AIII), 201–221 (ISDS…FILA), 227–247 (IFFK…PVIA), 270–290 (LFIW…GYGF), 322–342 (ILQI…CLVY), 353–375 (VSNF…MISY), and 377–397 (IWQT…KLLV).

It belongs to the O-antigen ligase family.

The protein localises to the membrane. This Rickettsia prowazekii (strain Madrid E) protein is Putative polysaccharide ligase RP358.